A 145-amino-acid chain; its full sequence is Hemoglobin fetal subunit beta (145 aa).

The 145-residue stretch at 1-145 (MLSAEEKASV…VANALAHRYH (145 aa)) folds into the Globin domain. Heme b contacts are provided by His-62 and His-91.

Belongs to the globin family. Heterotetramer of two alpha chains and two beta chains. As to expression, red blood cells.

Involved in oxygen transport from the lung to the various peripheral tissues. The protein is Hemoglobin fetal subunit beta of Capra hircus (Goat).